We begin with the raw amino-acid sequence, 405 residues long: MKILVVNCGSSSVKYQFIDMKGEKVLCKGLAERVGIEGSRLVHKVNEDKHVIEKPMKDHEEALKLILETLLDREIGVIRDLSEISAVGHRVVHGAERFASSILIDEEVMKVLEENIHLAPLHNPPNIMGIKAVQKLLPQVPNVGVFDTAFHQSMPRKAFLYPLPYEFYEKYRIRRYGFHGTSHRYVSKRAAEILGRDYYDFKVITCHLGNGASIAAIRHGKSIDTSMGFTPLEGLVMGTRSGDIDPAIVIYMQQNLSIPVEEVYNILNKKSGVLGLSKLSSDMRDIEDAAESGNEMAQLALEIYIYRIAKYIGAYTAAMNGVDAIVFTAGVGENSPYVREKVCDYLGFLGVKIDRNLNNMKGVERIVSTPDSRVAILIVPTNEELVIARDTKQIVESGIKELKLF.

Residue asparagine 7 participates in Mg(2+) binding. An ATP-binding site is contributed by lysine 14. Arginine 90 lines the substrate pocket. Catalysis depends on aspartate 147, which acts as the Proton donor/acceptor. ATP is bound by residues histidine 207–glycine 211, aspartate 282–arginine 284, and glycine 330–asparagine 334. Glutamate 383 serves as a coordination point for Mg(2+).

The protein belongs to the acetokinase family. As to quaternary structure, homodimer. It depends on Mg(2+) as a cofactor. Requires Mn(2+) as cofactor.

Its subcellular location is the cytoplasm. The enzyme catalyses acetate + ATP = acetyl phosphate + ADP. It participates in metabolic intermediate biosynthesis; acetyl-CoA biosynthesis; acetyl-CoA from acetate: step 1/2. Its function is as follows. Catalyzes the formation of acetyl phosphate from acetate and ATP. Can also catalyze the reverse reaction. The sequence is that of Acetate kinase from Pseudothermotoga lettingae (strain ATCC BAA-301 / DSM 14385 / NBRC 107922 / TMO) (Thermotoga lettingae).